A 431-amino-acid polypeptide reads, in one-letter code: Adenylosuccinate lyase (431 aa).

Residues R4 to Y5, R67 to D69, and T93 to S94 contribute to the N(6)-(1,2-dicarboxyethyl)-AMP site. Residue H141 is the Proton donor/acceptor of the active site. A N(6)-(1,2-dicarboxyethyl)-AMP-binding site is contributed by Q212. The Proton donor/acceptor role is filled by S262. Residues S263, K268–N270, N276, and S307–I311 contribute to the N(6)-(1,2-dicarboxyethyl)-AMP site.

This sequence belongs to the lyase 1 family. Adenylosuccinate lyase subfamily. In terms of assembly, homotetramer. Residues from neighboring subunits contribute catalytic and substrate-binding residues to each active site.

The enzyme catalyses N(6)-(1,2-dicarboxyethyl)-AMP = fumarate + AMP. The catalysed reaction is (2S)-2-[5-amino-1-(5-phospho-beta-D-ribosyl)imidazole-4-carboxamido]succinate = 5-amino-1-(5-phospho-beta-D-ribosyl)imidazole-4-carboxamide + fumarate. Its pathway is purine metabolism; AMP biosynthesis via de novo pathway; AMP from IMP: step 2/2. It participates in purine metabolism; IMP biosynthesis via de novo pathway; 5-amino-1-(5-phospho-D-ribosyl)imidazole-4-carboxamide from 5-amino-1-(5-phospho-D-ribosyl)imidazole-4-carboxylate: step 2/2. Catalyzes two reactions in de novo purine nucleotide biosynthesis. Catalyzes the breakdown of 5-aminoimidazole- (N-succinylocarboxamide) ribotide (SAICAR or 2-[5-amino-1-(5-phospho-beta-D-ribosyl)imidazole-4-carboxamido]succinate) to 5-aminoimidazole-4-carboxamide ribotide (AICAR or 5-amino-1-(5-phospho-beta-D-ribosyl)imidazole-4-carboxamide) and fumarate, and of adenylosuccinate (ADS or N(6)-(1,2-dicarboxyethyl)-AMP) to adenosine monophosphate (AMP) and fumarate. Influences the affinity of glutamyl--tRNA ligase for its substrates and increases its thermostability. The sequence is that of Adenylosuccinate lyase (purB) from Bacillus subtilis (strain 168).